The primary structure comprises 344 residues: Putative [LysW]-lysine/[LysW]-ornithine hydrolase (344 aa).

H66 serves as a coordination point for Zn(2+). D68 is a catalytic residue. D90 is a Zn(2+) binding site. The active-site Proton acceptor is E117. Residues E118, E139, and H297 each coordinate Zn(2+).

It belongs to the peptidase M20A family. LysK subfamily. The cofactor is Zn(2+). Requires Co(2+) as cofactor.

It localises to the cytoplasm. It catalyses the reaction [amino-group carrier protein]-C-terminal-gamma-(L-lysyl)-L-glutamate + H2O = [amino-group carrier protein]-C-terminal-L-glutamate + L-lysine. The catalysed reaction is [amino-group carrier protein]-C-terminal-gamma-(L-ornithyl)-L-glutamate + H2O = [amino-group carrier protein]-C-terminal-L-glutamate + L-ornithine. It functions in the pathway amino-acid biosynthesis; L-lysine biosynthesis via AAA pathway; L-lysine from L-alpha-aminoadipate (Thermus route): step 5/5. It participates in amino-acid biosynthesis; L-arginine biosynthesis. Catalyzes the release of L-lysine from [LysW]-gamma-L-lysine and the release of L-ornithine from [LysW]-L-ornithine. The protein is Putative [LysW]-lysine/[LysW]-ornithine hydrolase of Thermococcus kodakarensis (strain ATCC BAA-918 / JCM 12380 / KOD1) (Pyrococcus kodakaraensis (strain KOD1)).